The chain runs to 197 residues: Lipoprotein signal peptidase (197 aa).

The next 2 helical transmembrane spans lie at 73–93 (SNAIFLITNTLIVCYLYYLMI) and 97–117 (TIGSFAGYSFVIGGAVGNLID). Active-site residues include aspartate 126 and aspartate 144. Residues 135 to 155 (YSFPVFNLADCFITIGVIILI) traverse the membrane as a helical segment.

The protein belongs to the peptidase A8 family.

Its subcellular location is the cell inner membrane. It carries out the reaction Release of signal peptides from bacterial membrane prolipoproteins. Hydrolyzes -Xaa-Yaa-Zaa-|-(S,diacylglyceryl)Cys-, in which Xaa is hydrophobic (preferably Leu), and Yaa (Ala or Ser) and Zaa (Gly or Ala) have small, neutral side chains.. It participates in protein modification; lipoprotein biosynthesis (signal peptide cleavage). Its function is as follows. This protein specifically catalyzes the removal of signal peptides from prolipoproteins. The polypeptide is Lipoprotein signal peptidase (Rickettsia felis (strain ATCC VR-1525 / URRWXCal2) (Rickettsia azadi)).